The chain runs to 321 residues: Ribose-phosphate pyrophosphokinase C (321 aa).

The Mg(2+) site is built by aspartate 132 and aspartate 147. Positions serine 214–glutamate 229 are binding of phosphoribosylpyrophosphate.

This sequence belongs to the ribose-phosphate pyrophosphokinase family. Requires Mg(2+) as cofactor.

It is found in the cytoplasm. It catalyses the reaction D-ribose 5-phosphate + ATP = 5-phospho-alpha-D-ribose 1-diphosphate + AMP + H(+). The protein operates within metabolic intermediate biosynthesis; 5-phospho-alpha-D-ribose 1-diphosphate biosynthesis; 5-phospho-alpha-D-ribose 1-diphosphate from D-ribose 5-phosphate (route I): step 1/1. The polypeptide is Ribose-phosphate pyrophosphokinase C (prsC) (Dictyostelium discoideum (Social amoeba)).